We begin with the raw amino-acid sequence, 222 residues long: Pro-opiomelanocortin-1 (222 aa).

Positions 1-28 are cleaved as a signal peptide; sequence MVRGERMLCPAWLLALAVLCAAGSEVRA. Residues 29–105 constitute a propeptide that is removed on maturation; sequence QCMEDARCRD…DPESSPQHEH (77 aa).

The protein belongs to the POMC family. Post-translationally, specific enzymatic cleavages at paired basic residues yield the different active peptides.

Its subcellular location is the secreted. Functionally, stimulates the adrenal glands to release cortisol. Its function is as follows. Anorexigenic peptide. Increases the pigmentation of skin by increasing melanin production in melanocytes. Increases the pigmentation of skin by increasing melanin production in melanocytes. In terms of biological role, endogenous orexigenic opiate. Functionally, endogenous opiate. This chain is Pro-opiomelanocortin-1 (pomca), found in Cyprinus carpio (Common carp).